The chain runs to 597 residues: Elongation factor 4 (597 aa).

In terms of domain architecture, tr-type G spans 4 to 181 (SKIRNFSIIA…EIVDKISYPI (178 aa)). Residues 16-21 (DHGKST) and 128-131 (NKID) contribute to the GTP site.

It belongs to the TRAFAC class translation factor GTPase superfamily. Classic translation factor GTPase family. LepA subfamily.

It is found in the cell membrane. It catalyses the reaction GTP + H2O = GDP + phosphate + H(+). Its function is as follows. Required for accurate and efficient protein synthesis under certain stress conditions. May act as a fidelity factor of the translation reaction, by catalyzing a one-codon backward translocation of tRNAs on improperly translocated ribosomes. Back-translocation proceeds from a post-translocation (POST) complex to a pre-translocation (PRE) complex, thus giving elongation factor G a second chance to translocate the tRNAs correctly. Binds to ribosomes in a GTP-dependent manner. The polypeptide is Elongation factor 4 (Mycoplasmopsis pulmonis (strain UAB CTIP) (Mycoplasma pulmonis)).